The following is a 166-amino-acid chain: NAD(P)H-quinone oxidoreductase subunit I, chloroplastic (166 aa).

4Fe-4S ferredoxin-type domains lie at 55–84 and 95–124; these read GRIHFEFDKCIACEVCVRVCPIDLPVVDWK and LNYSIDFGICIFCGNCVEYCPTNCLSMTEE. Residues C64, C67, C70, C74, C104, C107, C110, and C114 each contribute to the [4Fe-4S] cluster site.

It belongs to the complex I 23 kDa subunit family. NDH is composed of at least 16 different subunits, 5 of which are encoded in the nucleus. Requires [4Fe-4S] cluster as cofactor.

Its subcellular location is the plastid. It is found in the chloroplast thylakoid membrane. The enzyme catalyses a plastoquinone + NADH + (n+1) H(+)(in) = a plastoquinol + NAD(+) + n H(+)(out). It carries out the reaction a plastoquinone + NADPH + (n+1) H(+)(in) = a plastoquinol + NADP(+) + n H(+)(out). Functionally, NDH shuttles electrons from NAD(P)H:plastoquinone, via FMN and iron-sulfur (Fe-S) centers, to quinones in the photosynthetic chain and possibly in a chloroplast respiratory chain. The immediate electron acceptor for the enzyme in this species is believed to be plastoquinone. Couples the redox reaction to proton translocation, and thus conserves the redox energy in a proton gradient. The sequence is that of NAD(P)H-quinone oxidoreductase subunit I, chloroplastic from Pericome caudata (Mountain tail-leaf).